The chain runs to 234 residues: Transcription factor bHLH160 (234 aa).

The segment covering 1-13 (MSSQPNHQTSISS) has biased composition (polar residues). The tract at residues 1–67 (MSSQPNHQTS…GAAKKQDHNA (67 aa)) is disordered. Residues 27–37 (IVEKESAEKDT) show a composition bias toward basic and acidic residues. Positions 60-115 (AKKQDHNAKERLRRMRLHASYLTLGTLLPDHSSSSSKKKWSAPSIIDNVITYIPKL) constitute a bHLH domain.

Belongs to the bHLH protein family.

The protein localises to the nucleus. The sequence is that of Transcription factor bHLH160 from Arabidopsis thaliana (Mouse-ear cress).